Consider the following 429-residue polypeptide: MSALRNIKFNEEEDGELPCLVTGEENNLQEILENVSYDGGNIVSDAKVERVNKQVENTSAGATDVHEKKRIPVSIITGYLGSGKSTLLEKIALKGADKKIAVILNEFGDSSEIEKAMTIKNGSNSYQEWLDLGNGCLCCSLKNIGVKAIEDMVERSPGKIDYILLETSGIADPAPIAKMFWQDEGLNSSVYIDGIITVLDCEHILKCLDDISIDAHWHGDKVGLEGNLTIAHFQLAMADRIIMNKYDTIEHSPEMVKQLKERVREINSIAPMFFTKYSDTPIQNLLDIHAYDSVRISDILDSGSGNGTIHDDRMGTIMLTFRPLKNEEEYNNKFIKQFLQPLLWKNFGAMTVLGGRRRDDGRDWEVQRTKGLILIEGENPIARVIQGVRDTYDVFPGKYDGSNKECKIVLIGKYLEKESIEELLRKTLE.

A psi-PxLVp motif motif is present at residues 15-22 (GELPCLVT). 78-85 (GYLGSGKS) serves as a coordination point for GTP. Cys136, Cys138, and Cys139 together coordinate Zn(2+). Residues 136–139 (CLCC) carry the CXCC motif motif. GTP is bound by residues 139–143 (CSLKN) and 244–247 (NKYD). A CobW C-terminal domain is found at 362–428 (RDWEVQRTKG…SIEELLRKTL (67 aa)).

Belongs to the SIMIBI class G3E GTPase family. ZNG1 subfamily.

It catalyses the reaction GTP + H2O = GDP + phosphate + H(+). In terms of biological role, zinc chaperone that directly transfers zinc cofactor to target metalloproteins, thereby activating them. Catalyzes zinc insertion into the active site of methionine aminopeptidase MAP1, which function to cleave the initiator methionine from polypeptides during or after protein translation. Mechanistically, the N-terminal psi-PxLVp motif binds to the C6H2-type zinc finger of inactive form of MAP1. After formation of the docked complex, zinc is transferred from the CXCC motif in the GTPase domain of ZNG1 to the zinc binding site in the peptidase domain of MAP1 in a process requiring GTP hydrolysis. GTP/GDP exchange is required for release of active MAP1. This is Zinc-regulated GTPase metalloprotein activator 1 from Saccharomyces cerevisiae (strain ATCC 204508 / S288c) (Baker's yeast).